Reading from the N-terminus, the 212-residue chain is RNA chaperone ProQ (212 aa).

The interval 107 to 153 (QDKAKAKRVAQAKSANPAAKTAKKPVKKPVAKRPKPAQSSKPAKEPV) is disordered. The segment covering 117 to 126 (QAKSANPAAK) has biased composition (low complexity). Positions 127–141 (TAKKPVKKPVAKRPK) are enriched in basic residues.

The protein belongs to the ProQ family.

The protein localises to the cytoplasm. Its function is as follows. RNA chaperone with significant RNA binding, RNA strand exchange and RNA duplexing activities. The polypeptide is RNA chaperone ProQ (Shewanella pealeana (strain ATCC 700345 / ANG-SQ1)).